Here is a 627-residue protein sequence, read N- to C-terminus: Phosphomethylpyrimidine synthase (627 aa).

Over residues 1-21 (MSAQQQKNLSESAQVDQQSVQ) the composition is skewed to polar residues. The disordered stretch occupies residues 1 to 32 (MSAQQQKNLSESAQVDQQSVQPFPRSQKVYVQ). Residues N231, M260, Y289, H325, 345–347 (SRG), 386–389 (DGLR), and E425 contribute to the substrate site. H429 is a Zn(2+) binding site. Y452 is a substrate binding site. H493 contacts Zn(2+). 3 residues coordinate [4Fe-4S] cluster: C573, C576, and C581.

The protein belongs to the ThiC family. As to quaternary structure, homodimer. It depends on [4Fe-4S] cluster as a cofactor.

The catalysed reaction is 5-amino-1-(5-phospho-beta-D-ribosyl)imidazole + S-adenosyl-L-methionine = 4-amino-2-methyl-5-(phosphooxymethyl)pyrimidine + CO + 5'-deoxyadenosine + formate + L-methionine + 3 H(+). It participates in cofactor biosynthesis; thiamine diphosphate biosynthesis. In terms of biological role, catalyzes the synthesis of the hydroxymethylpyrimidine phosphate (HMP-P) moiety of thiamine from aminoimidazole ribotide (AIR) in a radical S-adenosyl-L-methionine (SAM)-dependent reaction. This is Phosphomethylpyrimidine synthase from Ectopseudomonas mendocina (strain ymp) (Pseudomonas mendocina).